The sequence spans 377 residues: Succinyl-diaminopimelate desuccinylase (377 aa).

A Zn(2+)-binding site is contributed by H67. The active site involves D69. Zn(2+) is bound at residue D100. The Proton acceptor role is filled by E134. Zn(2+) is bound by residues E135, E163, and H349.

It belongs to the peptidase M20A family. DapE subfamily. Homodimer. Zn(2+) is required as a cofactor. The cofactor is Co(2+).

The enzyme catalyses N-succinyl-(2S,6S)-2,6-diaminopimelate + H2O = (2S,6S)-2,6-diaminopimelate + succinate. It functions in the pathway amino-acid biosynthesis; L-lysine biosynthesis via DAP pathway; LL-2,6-diaminopimelate from (S)-tetrahydrodipicolinate (succinylase route): step 3/3. Functionally, catalyzes the hydrolysis of N-succinyl-L,L-diaminopimelic acid (SDAP), forming succinate and LL-2,6-diaminopimelate (DAP), an intermediate involved in the bacterial biosynthesis of lysine and meso-diaminopimelic acid, an essential component of bacterial cell walls. In Haemophilus influenzae (strain 86-028NP), this protein is Succinyl-diaminopimelate desuccinylase.